The primary structure comprises 1055 residues: Auxin response factor 16 (1055 aa).

Positions 127 to 229 (FCKTLTASDT…QLLLGIRRAT (103 aa)) form a DNA-binding region, TF-B3. Disordered regions lie at residues 485–510 (PVMS…QQSS), 532–565 (QEHL…EQTS), 585–609 (SQLQ…PIAG), 701–720 (SDSI…LNHM), and 732–769 (SHSA…SRNL). Composition is skewed to low complexity over residues 488–510 (SQHQ…QQSS) and 532–552 (QEHL…ASSL). The span at 742 to 756 (PSSSTAPSTSRISPI) shows a compositional bias: low complexity. Positions 757-769 (NSLSRANQGSRNL) are enriched in polar residues. The PB1 domain occupies 940-1024 (RTFTKVQKRG…KSIKILSAAE (85 aa)). Residues 1034–1055 (LGGVPPQTQACSASDDANAWRG) form a disordered region.

Belongs to the ARF family. Homodimers and heterodimers. In terms of tissue distribution, expressed in roots, culms, leaves and young panicles.

It is found in the nucleus. In terms of biological role, auxin response factors (ARFs) are transcriptional factors that bind specifically to the DNA sequence 5'-TGTCTC-3' found in the auxin-responsive promoter elements (AuxREs). The protein is Auxin response factor 16 (ARF16) of Oryza sativa subsp. japonica (Rice).